The chain runs to 600 residues: Pyranose dehydrogenase 2 (600 aa).

Residues 1-25 form the signal peptide; that stretch reads MLSRVAKLNSRLVSLALLGSQIAFG. Residues asparagine 99 and asparagine 114 are each glycosylated (N-linked (GlcNAc...) asparagine). Position 127 is a tele-8alpha-FAD histidine (histidine 127). Asparagine 199, asparagine 275, and asparagine 342 each carry an N-linked (GlcNAc...) asparagine glycan. The Proton acceptor role is filled by histidine 535. Histidine 579 is an active-site residue.

It belongs to the GMC oxidoreductase family. Monomer. FAD is required as a cofactor. Post-translationally, N-glycosylated.

It localises to the secreted. The enzyme catalyses pyranose + acceptor = pyranos-2-ulose + reduced acceptor.. It carries out the reaction pyranose + acceptor = pyranos-3-ulose + reduced acceptor.. It catalyses the reaction pyranose + acceptor = pyranos-2,3-diulose + reduced acceptor.. The catalysed reaction is a pyranoside + acceptor = a pyranosid-3-ulose + reduced acceptor.. The enzyme catalyses a pyranoside + acceptor = a pyranosid-3,4-diulose + reduced acceptor.. Its function is as follows. Catalyzes the single-oxidation or sequential double oxidation reaction of carbohydrates primarily at carbon-2 and/or carbon-3 with the concomitant reduction of the flavin. The enzyme exhibits a broad sugar substrate specificity, oxidizing different aldopyranoses to the corresponding C-1, C-2, C-3 or C-1,2, C-2,3 and C-3,4 (di)dehydro sugars with substrate-specific regioselectivity. Accepts only a narrow range of electron acceptors such as substituted benzoquinones and complexed metal ions and reacts extremely slowly with O(2) as acceptor. May play a role in the natural recycling of plant matter by oxidizing all major monosaccharides in lignocellulose and by reducing quinone compounds or reactive radical species generated during lignin depolymerization. The sequence is that of Pyranose dehydrogenase 2 from Leucoagaricus meleagris (Western flat-topped agaric).